The following is a 139-amino-acid chain: HTH-type transcriptional regulator MntR (139 aa).

The HTH dtxR-type domain maps to 1-63 (MPTPSMEDHI…YEKYRGLTLT (63 aa)). Mn(2+) is bound by residues Asp-8, Glu-11, His-77, Glu-99, Glu-102, and His-103.

This sequence belongs to the DtxR/MntR family. As to quaternary structure, homodimer.

Its subcellular location is the cytoplasm. Its activity is regulated as follows. DNA binding is strongly activated by Mn(2+). Its function is as follows. Central regulator of manganese homeostasis. This is HTH-type transcriptional regulator MntR from Lysinibacillus sphaericus (strain C3-41).